The chain runs to 188 residues: Elongation factor P (188 aa).

Lysine 34 carries the post-translational modification N6-(3,6-diaminohexanoyl)-5-hydroxylysine.

Belongs to the elongation factor P family. In terms of processing, may be beta-lysylated on the epsilon-amino group of Lys-34 by the combined action of EpmA and EpmB, and then hydroxylated on the C5 position of the same residue by EpmC (if this protein is present). Lysylation is critical for the stimulatory effect of EF-P on peptide-bond formation. The lysylation moiety may extend toward the peptidyltransferase center and stabilize the terminal 3-CCA end of the tRNA. Hydroxylation of the C5 position on Lys-34 may allow additional potential stabilizing hydrogen-bond interactions with the P-tRNA.

It is found in the cytoplasm. The protein operates within protein biosynthesis; polypeptide chain elongation. Involved in peptide bond synthesis. Alleviates ribosome stalling that occurs when 3 or more consecutive Pro residues or the sequence PPG is present in a protein, possibly by augmenting the peptidyl transferase activity of the ribosome. Modification of Lys-34 is required for alleviation. The sequence is that of Elongation factor P from Hamiltonella defensa subsp. Acyrthosiphon pisum (strain 5AT).